A 277-amino-acid chain; its full sequence is Knob-associated histidine-rich protein (277 aa).

Disordered regions lie at residues 95–114 and 162–277; these read DGSHGNLRGHDNKGSEGYGY and SSVN…KKKK. Composition is skewed to basic and acidic residues over residues 169–190 and 211–220; these read KHGDEKHHSSKKHEGNDGEGEK and KDNEDAESVK. Residues 221–237 are compositionally biased toward basic residues; sequence SKKHKSHDCEKKKSKKH. Basic and acidic residues-rich tracts occupy residues 238-259 and 268-277; these read KDNEDAESVKSKKSVKEKGEKH and KTNEEKKKKK.

Its subcellular location is the secreted. KAHRP might mimick human histidine-rich glycoproteins to anchor host thrombospondin or a parasite analog in a binding complex with the endothelial cell receptor. This chain is Knob-associated histidine-rich protein, found in Plasmodium falciparum (isolate CDC / Honduras).